Reading from the N-terminus, the 450-residue chain is Ribulose bisphosphate carboxylase large chain (450 aa).

Lys4 carries the N6,N6,N6-trimethyllysine modification. Substrate contacts are provided by Asn113 and Thr163. The Proton acceptor role is filled by Lys165. Lys167 lines the substrate pocket. Mg(2+)-binding residues include Lys191, Asp193, and Glu194. Position 191 is an N6-carboxylysine (Lys191). His284 acts as the Proton acceptor in catalysis. Positions 285, 317, and 369 each coordinate substrate.

Belongs to the RuBisCO large chain family. Type I subfamily. In terms of assembly, heterohexadecamer of 8 large chains and 8 small chains; disulfide-linked. The disulfide link is formed within the large subunit homodimers. It depends on Mg(2+) as a cofactor. In terms of processing, the disulfide bond which can form in the large chain dimeric partners within the hexadecamer appears to be associated with oxidative stress and protein turnover.

The protein resides in the plastid. It localises to the chloroplast. It carries out the reaction 2 (2R)-3-phosphoglycerate + 2 H(+) = D-ribulose 1,5-bisphosphate + CO2 + H2O. It catalyses the reaction D-ribulose 1,5-bisphosphate + O2 = 2-phosphoglycolate + (2R)-3-phosphoglycerate + 2 H(+). In terms of biological role, ruBisCO catalyzes two reactions: the carboxylation of D-ribulose 1,5-bisphosphate, the primary event in carbon dioxide fixation, as well as the oxidative fragmentation of the pentose substrate in the photorespiration process. Both reactions occur simultaneously and in competition at the same active site. This is Ribulose bisphosphate carboxylase large chain from Crassula rupestris subsp. marnieriana (Pygmyweed).